The chain runs to 89 residues: Small ribosomal subunit protein uS15 (89 aa).

This sequence belongs to the universal ribosomal protein uS15 family. As to quaternary structure, part of the 30S ribosomal subunit. Forms a bridge to the 50S subunit in the 70S ribosome, contacting the 23S rRNA.

Functionally, one of the primary rRNA binding proteins, it binds directly to 16S rRNA where it helps nucleate assembly of the platform of the 30S subunit by binding and bridging several RNA helices of the 16S rRNA. Forms an intersubunit bridge (bridge B4) with the 23S rRNA of the 50S subunit in the ribosome. The sequence is that of Small ribosomal subunit protein uS15 from Shewanella sediminis (strain HAW-EB3).